A 72-amino-acid polypeptide reads, in one-letter code: Gas vesicle protein A (72 aa).

Belongs to the gas vesicle GvpA family. In terms of assembly, the gas vesicle shell is 2 nm thick and consists of a single layer of this protein. It forms helical ribs nearly perpendicular to the long axis of the vesicle.

Its subcellular location is the gas vesicle shell. Gas vesicles are hollow, gas filled proteinaceous nanostructures found in some microorganisms. During planktonic growth they allow positioning of the organism at a favorable depth for light or nutrient acquisition. GvpA forms the protein shell. This chain is Gas vesicle protein A, found in Haloquadratum walsbyi (strain DSM 16790 / HBSQ001).